The following is a 624-amino-acid chain: uncharacterized protein (624 aa).

Positions 1–29 are cleaved as a signal peptide; it reads MRFHRQGTAATVGVLLIVLLGFCWKLSES. Residues Asn-68, Asn-150, Asn-219, Asn-366, Asn-441, Asn-447, Asn-464, and Asn-528 are each glycosylated (N-linked (GlcNAc...) asparagine). The tract at residues 141-174 is disordered; sequence LERRHGRFGNGTHGDHPKGPPPPPPPDEKDRGSQ.

Its subcellular location is the secreted. This is an uncharacterized protein from Saccharomyces cerevisiae (strain ATCC 204508 / S288c) (Baker's yeast).